Consider the following 956-residue polypeptide: DNA polymerase I (956 aa).

One can recognise a 5'-3' exonuclease domain in the interval 209–296 (VTVRQWVDYR…VTDLPLDIEF (88 aa)).

Belongs to the DNA polymerase type-A family. Single-chain monomer with multiple functions.

The catalysed reaction is DNA(n) + a 2'-deoxyribonucleoside 5'-triphosphate = DNA(n+1) + diphosphate. Its function is as follows. A DNA polymerase, required for DNA repair after DNA damage induced by ionizing radiation (IR); this is not the major DNA polymerase. Following severe irradiation (7 kGy of gamma irradiation) genomic DNA is fragmented. DNA is progressively degraded for the first 1.5 hours after IR, in a step promoted by RecA and counterbalanced by DNA Pol I and Pol III, followed by massive DNA synthesis and genome reassembly in the next hour. Optimal priming of DNA synthesis requires both RecA and RadA, Pol III initiates DNA synthesis while both Pol I and Pol III are required for its continuation. May also have 5'-3' exonuclease activity. This is DNA polymerase I (polA) from Deinococcus radiodurans (strain ATCC 13939 / DSM 20539 / JCM 16871 / CCUG 27074 / LMG 4051 / NBRC 15346 / NCIMB 9279 / VKM B-1422 / R1).